Reading from the N-terminus, the 127-residue chain is uncharacterized protein (127 aa).

This is an uncharacterized protein from Caenorhabditis elegans.